A 515-amino-acid polypeptide reads, in one-letter code: MGQGSSKHADSKLDSYPSFSRSDTQGSIKSLKSLKTVLGKGKDSNHDRRTSTDTTHSRHRYPETPPSLPPPPSPGILATSPAVLQKHQQEDSGNSSQSPTSPHPSNQPAMLSPSTAASQHHHHHSSSSSYAVSPTSPTSPTSSGPIGSNFDSASEHNGPVYPQDQQGPVIIPNSAISSTDPDDPETVVSLNVDEMIQRLIHVGYSRKSSKSVCLKNAEITSICMAVREIFLSQPTLLELTPPVKIVGDVHGQYSDLIRLFEMCGFPPSSNYLFLGDYVDRGKQSLETILLLFLYKIRYPENFFLLRGNHECANITRVYGFYDECKRRCNIKIWKTFINTFNCLPIASVVAGKIFCVHGGLSPSLSHMDDIREIPRPTDVPDYGLLNDLLWSDPADTENDWEDNERGVSFVFNKNVIRQFLAKHDFDLICRAHMVVEDGYEFFNDRTLCTVFSAPNYCGEFDNWGAVMSVNSELLCSFELIKPLDQAAIRRELKKSKRSGMAIYQSPPAEQVTQSV.

A disordered region spans residues 1 to 186 (MGQGSSKHAD…SSTDPDDPET (186 aa)). The segment covering 17-30 (PSFSRSDTQGSIKS) has biased composition (polar residues). S18 carries the post-translational modification Phosphoserine. Residues 40–51 (KGKDSNHDRRTS) show a composition bias toward basic and acidic residues. The segment covering 63-74 (ETPPSLPPPPSP) has biased composition (pro residues). The segment covering 91–109 (DSGNSSQSPTSPHPSNQPA) has biased composition (polar residues). A compositionally biased stretch (low complexity) spans 126 to 143 (SSSSYAVSPTSPTSPTSS). 4 residues coordinate Mn(2+): D248, H250, D276, and N308. The active-site Proton donor is the H309. Residues H357 and H432 each coordinate Mn(2+). Phosphoserine occurs at positions 505 and 514.

It belongs to the PPP phosphatase family. PP-Z subfamily. It depends on Mn(2+) as a cofactor.

The protein localises to the cytoplasm. It catalyses the reaction O-phospho-L-seryl-[protein] + H2O = L-seryl-[protein] + phosphate. The enzyme catalyses O-phospho-L-threonyl-[protein] + H2O = L-threonyl-[protein] + phosphate. The polypeptide is Serine/threonine-protein phosphatase PP-Z (pzh1) (Schizosaccharomyces pombe (strain 972 / ATCC 24843) (Fission yeast)).